The primary structure comprises 435 residues: Enolase (435 aa).

A (2R)-2-phosphoglycerate-binding site is contributed by Gln167. The active-site Proton donor is the Glu209. Mg(2+) contacts are provided by Asp246, Glu291, and Asp318. Residues Lys343, Arg372, Ser373, and Lys394 each coordinate (2R)-2-phosphoglycerate. The active-site Proton acceptor is the Lys343.

This sequence belongs to the enolase family. As to quaternary structure, component of the RNA degradosome, a multiprotein complex involved in RNA processing and mRNA degradation. Mg(2+) is required as a cofactor.

It is found in the cytoplasm. It localises to the secreted. The protein resides in the cell surface. The enzyme catalyses (2R)-2-phosphoglycerate = phosphoenolpyruvate + H2O. The protein operates within carbohydrate degradation; glycolysis; pyruvate from D-glyceraldehyde 3-phosphate: step 4/5. Catalyzes the reversible conversion of 2-phosphoglycerate (2-PG) into phosphoenolpyruvate (PEP). It is essential for the degradation of carbohydrates via glycolysis. The protein is Enolase of Psychromonas ingrahamii (strain DSM 17664 / CCUG 51855 / 37).